The primary structure comprises 455 residues: Kynurenine 3-monooxygenase (455 aa).

Belongs to the aromatic-ring hydroxylase family. KMO subfamily. It depends on FAD as a cofactor.

The enzyme catalyses L-kynurenine + NADPH + O2 + H(+) = 3-hydroxy-L-kynurenine + NADP(+) + H2O. It functions in the pathway cofactor biosynthesis; NAD(+) biosynthesis; quinolinate from L-kynurenine: step 1/3. Catalyzes the hydroxylation of L-kynurenine (L-Kyn) to form 3-hydroxy-L-kynurenine (L-3OHKyn). Required for synthesis of quinolinic acid. This is Kynurenine 3-monooxygenase from Xanthomonas euvesicatoria pv. vesicatoria (strain 85-10) (Xanthomonas campestris pv. vesicatoria).